Reading from the N-terminus, the 621-residue chain is tRNA uridine 5-carboxymethylaminomethyl modification enzyme MnmG (621 aa).

8–13 (GAGHAG) lines the FAD pocket. 269–283 (GPRYCPSVEDKIFRF) is an NAD(+) binding site.

This sequence belongs to the MnmG family. Homodimer. Heterotetramer of two MnmE and two MnmG subunits. Requires FAD as cofactor.

The protein resides in the cytoplasm. Its function is as follows. NAD-binding protein involved in the addition of a carboxymethylaminomethyl (cmnm) group at the wobble position (U34) of certain tRNAs, forming tRNA-cmnm(5)s(2)U34. The chain is tRNA uridine 5-carboxymethylaminomethyl modification enzyme MnmG from Chlorobium chlorochromatii (strain CaD3).